The sequence spans 516 residues: Multicopper oxidase CueO (516 aa).

Positions 1-28 (MQRRDFLKYSVALGVASALPLWSRAVFA) form a signal peptide, tat-type signal. 3 consecutive Plastocyanin-like domains span residues 55–165 (GQST…IEDD), 227–292 (PRGW…DNKP), and 399–516 (GGKF…GFTV). Cu cation-binding residues include histidine 101, histidine 103, histidine 141, and histidine 143. Positions 443, 446, 448, 499, 500, 501, and 505 each coordinate Cu cation.

This sequence belongs to the multicopper oxidase family. In terms of assembly, monomer. The cofactor is Cu cation. In terms of processing, predicted to be exported by the Tat system. The position of the signal peptide cleavage has not been experimentally proven.

The protein resides in the periplasm. It catalyses the reaction 4 Cu(+) + O2 + 4 H(+) = 4 Cu(2+) + 2 H2O. Multicopper oxidase involved in copper homeostasis and copper tolerance under aerobic conditions. Is responsible for the oxidation of Cu(+) to the less harmful Cu(2+) in the periplasm, thereby preventing Cu(+) from entering the cytoplasm. The protein is Multicopper oxidase CueO (cueO) of Escherichia coli O157:H7.